Consider the following 435-residue polypeptide: Arginine biosynthesis bifunctional protein ArgJ, mitochondrial (435 aa).

Substrate contacts are provided by T179, K205, T216, E302, N430, and S435. The active-site Nucleophile is the T216.

The protein belongs to the ArgJ family. In terms of assembly, heterodimer of an alpha and a beta chain. In terms of processing, the alpha and beta chains are autoproteolytically processed from a single precursor protein within the mitochondrion.

The protein localises to the mitochondrion matrix. The enzyme catalyses N(2)-acetyl-L-ornithine + L-glutamate = N-acetyl-L-glutamate + L-ornithine. The catalysed reaction is L-glutamate + acetyl-CoA = N-acetyl-L-glutamate + CoA + H(+). It participates in amino-acid biosynthesis; L-arginine biosynthesis; L-ornithine and N-acetyl-L-glutamate from L-glutamate and N(2)-acetyl-L-ornithine (cyclic): step 1/1. Its pathway is amino-acid biosynthesis; L-arginine biosynthesis; N(2)-acetyl-L-ornithine from L-glutamate: step 1/4. Functionally, catalyzes two activities which are involved in the cyclic version of arginine biosynthesis: the synthesis of acetylglutamate from glutamate and acetyl-CoA, and of ornithine by transacetylation between acetylornithine and glutamate. This chain is Arginine biosynthesis bifunctional protein ArgJ, mitochondrial, found in Schizosaccharomyces japonicus (strain yFS275 / FY16936) (Fission yeast).